Consider the following 544-residue polypeptide: Chaperonin GroEL 3 (544 aa).

Residues 30–33, Lys-51, 87–91, Gly-415, and Asp-496 each bind ATP; these read TLGP and DGTTT.

This sequence belongs to the chaperonin (HSP60) family. In terms of assembly, forms a cylinder of 14 subunits composed of two heptameric rings stacked back-to-back. Interacts with the co-chaperonin GroES.

The protein resides in the cytoplasm. It carries out the reaction ATP + H2O + a folded polypeptide = ADP + phosphate + an unfolded polypeptide.. In terms of biological role, together with its co-chaperonin GroES, plays an essential role in assisting protein folding. The GroEL-GroES system forms a nano-cage that allows encapsulation of the non-native substrate proteins and provides a physical environment optimized to promote and accelerate protein folding. This chain is Chaperonin GroEL 3, found in Rhizobium meliloti (strain 1021) (Ensifer meliloti).